We begin with the raw amino-acid sequence, 299 residues long: Myozenin-1 (299 aa).

Residues 1–34 (MPLSGTPAPNKKRKSSKLIMELTGGGQESSGLNL) form a disordered region. At Ser-82 the chain carries Phosphoserine. Residues 102 to 174 (GQGFSYSKSN…TGSGDQAGGE (73 aa)) form a disordered region. Gly residues-rich tracts occupy residues 112 to 125 (GRGG…GSAG) and 137 to 173 (SGSG…QAGG).

The protein belongs to the myozenin family. In terms of assembly, interacts with ACTN2, ACTN3, FLNA, FLNB, FLNC, LDB3, PPP3CA and TCAP. Interacts via its C-terminal region with MYOT. Expressed primarily in skeletal muscle. Detected at lower levels in heart, prostate and pancreas.

It localises to the nucleus. It is found in the cell projection. Its subcellular location is the pseudopodium. Its function is as follows. Myozenins may serve as intracellular binding proteins involved in linking Z-disk proteins such as alpha-actinin, gamma-filamin, TCAP/telethonin, LDB3/ZASP and localizing calcineurin signaling to the sarcomere. Plays an important role in the modulation of calcineurin signaling. May play a role in myofibrillogenesis. This Homo sapiens (Human) protein is Myozenin-1.